A 368-amino-acid polypeptide reads, in one-letter code: 3-dehydroquinate synthase (368 aa).

NAD(+) is bound by residues 112 to 116 (GVIGD), 136 to 137 (TT), Lys149, and Lys158. Zn(2+) contacts are provided by Glu191, His256, and His273.

This sequence belongs to the sugar phosphate cyclases superfamily. Dehydroquinate synthase family. Co(2+) is required as a cofactor. Zn(2+) serves as cofactor. Requires NAD(+) as cofactor.

It is found in the cytoplasm. The enzyme catalyses 7-phospho-2-dehydro-3-deoxy-D-arabino-heptonate = 3-dehydroquinate + phosphate. Its pathway is metabolic intermediate biosynthesis; chorismate biosynthesis; chorismate from D-erythrose 4-phosphate and phosphoenolpyruvate: step 2/7. Catalyzes the conversion of 3-deoxy-D-arabino-heptulosonate 7-phosphate (DAHP) to dehydroquinate (DHQ). The protein is 3-dehydroquinate synthase of Prochlorococcus marinus (strain NATL1A).